Reading from the N-terminus, the 196-residue chain is uncharacterized protein (196 aa).

The region spanning M1–G183 is the Macro domain.

Belongs to the MacroD-type family.

This is an uncharacterized protein from Thermoplasma acidophilum (strain ATCC 25905 / DSM 1728 / JCM 9062 / NBRC 15155 / AMRC-C165).